Reading from the N-terminus, the 87-residue chain is Small ribosomal subunit protein bS20 (87 aa).

Belongs to the bacterial ribosomal protein bS20 family.

Binds directly to 16S ribosomal RNA. The protein is Small ribosomal subunit protein bS20 of Rhizorhabdus wittichii (strain DSM 6014 / CCUG 31198 / JCM 15750 / NBRC 105917 / EY 4224 / RW1) (Sphingomonas wittichii).